The sequence spans 246 residues: Sensory transduction protein LytT (246 aa).

Residues 3–117 (KVLVVDDEML…RIVQTLKKYK (115 aa)) enclose the Response regulatory domain. Positions 142-246 (LALPIEESIV…AKELKKLLRI (105 aa)) constitute an HTH LytTR-type domain.

Post-translationally, phosphorylated by LytS.

The protein resides in the cytoplasm. Member of the two-component regulatory system LytS/LytT that probably regulates genes involved in cell wall metabolism. This is Sensory transduction protein LytT (lytT) from Bacillus cereus (strain ATCC 14579 / DSM 31 / CCUG 7414 / JCM 2152 / NBRC 15305 / NCIMB 9373 / NCTC 2599 / NRRL B-3711).